Here is a 327-residue protein sequence, read N- to C-terminus: GMP reductase (327 aa).

The active-site Thioimidate intermediate is the Cys-175. Residue 204 to 227 participates in NADP(+) binding; that stretch reads IIADGGIRTNGDVAKSIRFGATMV.

This sequence belongs to the IMPDH/GMPR family. GuaC type 2 subfamily.

It catalyses the reaction IMP + NH4(+) + NADP(+) = GMP + NADPH + 2 H(+). Its function is as follows. Catalyzes the irreversible NADPH-dependent deamination of GMP to IMP. It functions in the conversion of nucleobase, nucleoside and nucleotide derivatives of G to A nucleotides, and in maintaining the intracellular balance of A and G nucleotides. The protein is GMP reductase of Bacillus cereus (strain ZK / E33L).